The chain runs to 638 residues: Ubiquilin-2 (638 aa).

Residues methionine 1–proline 26 show a composition bias toward low complexity. Disordered regions lie at residues methionine 1–lysine 31 and arginine 107–glycine 158. Alanine 2 is subject to N-acetylalanine. Serine 25 carries the post-translational modification Phosphoserine. The 75-residue stretch at isoleucine 33–arginine 107 folds into the Ubiquitin-like domain. Low complexity predominate over residues alanine 112–glycine 158. STI1 domains follow at residues serine 189–methionine 217 and asparagine 219–methionine 258. The interval phenylalanine 298–alanine 364 is disordered. Over residues threonine 305–threonine 316 the composition is skewed to low complexity. The span at leucine 327–threonine 336 shows a compositional bias: pro residues. Residues threonine 337–alanine 364 show a composition bias toward low complexity. 2 consecutive STI1 domains span residues asparagine 393–methionine 440 and leucine 444–leucine 476. 11 tandem repeats follow at residues proline 505–glycine 507, proline 508–threonine 510, proline 511–glycine 513, proline 514–glycine 516, proline 517–valine 519, proline 520–threonine 522, proline 523–glycine 525, proline 526–glycine 528, proline 529–glycine 531, proline 532–threonine 533, and proline 535–serine 537. Residues proline 505–serine 537 form an 11 X 3 AA tandem repeats P-X-X region. The tract at residues glycine 528–asparagine 570 is disordered. Positions threonine 533–threonine 551 are enriched in low complexity. Polar residues predominate over residues valine 552–asparagine 570. The UBA domain occupies proline 589 to serine 635.

Homodimer. Forms heterodimer with UBQLN1. Binds UBE3A and BTRC. Interacts with the 19S proteasome subunit. Interacts with C9orf72. Binds CD47. Interacts with HNRNPA1 and HNRNPU. Found in a complex with UBQLN1 and MAP1LC3A/B/C. Interacts with EPS15, EPN1 and EPN2. Interacts with HERPUD1. Interacts with RAD23A. Interacts with TARDBP. Interacts (via C-terminus) with FAF2 (via N-terminus). Interacts with UBQLN4. Degraded during macroautophagy. Highly expressed in smooth muscle. Expression in other tissues is very low.

It localises to the cytoplasm. The protein resides in the nucleus. Its subcellular location is the membrane. It is found in the cytoplasmic vesicle. The protein localises to the autophagosome. Its function is as follows. Plays an important role in the regulation of different protein degradation mechanisms and pathways including ubiquitin-proteasome system (UPS), autophagy and the endoplasmic reticulum-associated protein degradation (ERAD) pathway. Mediates the proteasomal targeting of misfolded or accumulated proteins for degradation by binding (via UBA domain) to their polyubiquitin chains and by interacting (via ubiquitin-like domain) with the subunits of the proteasome. Plays a role in the ERAD pathway via its interaction with ER-localized proteins FAF2/UBXD8 and HERPUD1 and may form a link between the polyubiquitinated ERAD substrates and the proteasome. Involved in the regulation of macroautophagy and autophagosome formation; required for maturation of autophagy-related protein LC3 from the cytosolic form LC3-I to the membrane-bound form LC3-II and may assist in the maturation of autophagosomes to autolysosomes by mediating autophagosome-lysosome fusion. Negatively regulates the endocytosis of GPCR receptors: AVPR2 and ADRB2, by specifically reducing the rate at which receptor-arrestin complexes concentrate in clathrin-coated pits (CCPs). Links CD47 to vimentin-containing intermediate filaments of the cytoskeleton. In Mus musculus (Mouse), this protein is Ubiquilin-2 (Ubqln2).